Here is a 1167-residue protein sequence, read N- to C-terminus: Nucleolar protein 8 (1167 aa).

Residues 8 to 89 enclose the RRM domain; that stretch reads KRLYVGGLSQ…GTLQIQLAKE (82 aa). The interval 223–304 is disordered; it reads VQKDESSTGS…NSISDDDTDS (82 aa). Residue K225 forms a Glycyl lysine isopeptide (Lys-Gly) (interchain with G-Cter in SUMO2) linkage. Residues 248–275 show a composition bias toward polar residues; the sequence is LTQQQAAQKRTCDSITPSKSSPVPVSDT. Phosphoserine is present on residues S268 and S298. T302 is modified (phosphothreonine). S304 is modified (phosphoserine). K314 is covalently cross-linked (Glycyl lysine isopeptide (Lys-Gly) (interchain with G-Cter in SUMO2)). A phosphoserine mark is found at S331 and S365. The residue at position 376 (Y376) is a Phosphotyrosine. Phosphoserine is present on S378. T381 carries the phosphothreonine modification. S432 is modified (phosphoserine). 5 disordered regions span residues 435–470, 499–533, 590–908, 932–982, and 1006–1026; these read ESALSHGLKSLNRKSPSHSSSSEDADSASELADSEG, LKVPNEDTKSDGPETTTQCKFDRGSKSPKTPTGLR, KDSV…EEEL, NRGS…AEKL, and YTSEKEEGTPWNEDCGKEKPE. The segment covering 457 to 470 has biased composition (acidic residues); the sequence is EDADSASELADSEG. The segment covering 501–510 has biased composition (basic and acidic residues); the sequence is VPNEDTKSDG. A compositionally biased stretch (polar residues) spans 640-652; that stretch reads NYIQPQKRQTTFE. Over residues 653–668 the composition is skewed to basic and acidic residues; it reads SQDRKAVSPSSSEKRS. At S723 the chain carries Phosphoserine. Positions 727–736 are enriched in basic and acidic residues; sequence SSKDTREIKT. Residues 738–748 are compositionally biased toward polar residues; that stretch reads FSLSISNSSDV. A compositionally biased stretch (basic and acidic residues) spans 749–776; it reads SAKDKHAEDNEKRLAALEARQKAKEVQK. Residues 753–779 are a coiled coil; the sequence is KHAEDNEKRLAALEARQKAKEVQKKLV. T795 is subject to Phosphothreonine. S801 is modified (phosphoserine). Over residues 817-827 the composition is skewed to basic and acidic residues; that stretch reads HPGEEWVKESM. Residues S837, S838, S843, and S845 each carry the phosphoserine modification. Residues 837-847 are compositionally biased toward acidic residues; sequence SSDDDESDSED. The segment covering 874-887 has biased composition (basic and acidic residues); the sequence is GTDDRFRMDSRFLE. A coiled-coil region spans residues 886-924; the sequence is LETDSEEEQEEVNEKKTAEEEELAEEKKKALNVVQSVLQ. T888 bears the Phosphothreonine mark. A Phosphoserine modification is found at S890. Composition is skewed to basic and acidic residues over residues 940 to 968 and 1007 to 1026; these read KFKDIIHYDPTKQDHATYERKRDDKPKES and TSEKEEGTPWNEDCGKEKPE. Phosphoserine is present on S1036. Residue K1057 forms a Glycyl lysine isopeptide (Lys-Gly) (interchain with G-Cter in SUMO2) linkage. Disordered stretches follow at residues 1071 to 1105 and 1145 to 1167; these read IVWQEDPRLQDSSSEEEDVTEETDHRNSSPGEASL and RTTNLRMDCRKKHKDAKRKMKPK. Residues S1082, S1083, S1084, and S1099 each carry the phosphoserine modification. The segment covering 1153-1167 has biased composition (basic residues); the sequence is CRKKHKDAKRKMKPK.

In terms of assembly, interacts with the GTP form of RRAGA, RRAGC and RRAGD. Interacts with NIP7. Interacts with DDX18; the interaction is RNA-dependent. Interacts with DDX47; the interaction is RNA-dependent. In terms of processing, phosphorylated. In terms of tissue distribution, expressed in various diffuse-type gastric cancers. Detected at lower levels in skeletal muscle.

The protein localises to the nucleus. The protein resides in the nucleolus. Plays an essential role in the survival of diffuse-type gastric cancer cells. Acts as a nucleolar anchoring protein for DDX47. May be involved in regulation of gene expression at the post-transcriptional level or in ribosome biogenesis in cancer cells. In Homo sapiens (Human), this protein is Nucleolar protein 8.